The sequence spans 315 residues: Cytochrome c biogenesis protein CcsA (315 aa).

7 helical membrane-spanning segments follow: residues 14–34 (VVSLGLAAFLFLLIALPISFW), 72–92 (ISNLYESLCFLTWGCTLAQLF), 101–121 (IVSAVATPVSLLSIGFASFVL), 146–166 (VIMCSYAALLIGSILSFGVFL), 221–241 (SITAGFLLLTVGLISGAVWAN), 255–272 (TWALICWLVYAAYLHTRL), and 282–302 (AILAIAGFFVIIVCYIGVNLL).

The protein belongs to the CcmF/CycK/Ccl1/NrfE/CcsA family. May interact with ccs1.

It localises to the cellular thylakoid membrane. Required during biogenesis of c-type cytochromes (cytochrome c6 and cytochrome f) at the step of heme attachment. This is Cytochrome c biogenesis protein CcsA from Prochlorococcus marinus (strain NATL1A).